The following is a 334-amino-acid chain: MSVAPHIPVMMSEVLHALEPRSGALYIDGTFGAGGYSRGILSAADCKLIGIDRDPAVQPTATQLVQASGGRFAFAEAPFSAMGEVLASRGIDQVDGIVLDIGVSSMQIDQAERGFSFMRKGPLDMRMAASGPTAADAVNRLKEAELADIFYVYGEERRSRRIAKFICTARAEAKIETTDRLAEIVTRATGGKHSKIHPATKVFQALRIFVNDELGELARALEASERLLAPLGRLVVVTFHSLEDRMVKTFLRSRAGLAGGGGSRYEPAVEAGPAPSFSLLTRRAVSASDEEAAENPRARSAKLRAAIRNEAPAWSDSPSLHTSIVPLARLEAAL.

S-adenosyl-L-methionine is bound by residues 34–36, Asp52, Ala87, Asp100, and Gln107; that span reads GGY.

The protein belongs to the methyltransferase superfamily. RsmH family.

Its subcellular location is the cytoplasm. The catalysed reaction is cytidine(1402) in 16S rRNA + S-adenosyl-L-methionine = N(4)-methylcytidine(1402) in 16S rRNA + S-adenosyl-L-homocysteine + H(+). Functionally, specifically methylates the N4 position of cytidine in position 1402 (C1402) of 16S rRNA. The chain is Ribosomal RNA small subunit methyltransferase H from Maricaulis maris (strain MCS10) (Caulobacter maris).